The sequence spans 452 residues: Phosphoglucosamine mutase (452 aa).

The active-site Phosphoserine intermediate is the S104. Mg(2+)-binding residues include S104, D246, D248, and D250. S104 is modified (phosphoserine).

The protein belongs to the phosphohexose mutase family. Mg(2+) serves as cofactor. Activated by phosphorylation.

It catalyses the reaction alpha-D-glucosamine 1-phosphate = D-glucosamine 6-phosphate. Its function is as follows. Catalyzes the conversion of glucosamine-6-phosphate to glucosamine-1-phosphate. The protein is Phosphoglucosamine mutase of Streptomyces griseus subsp. griseus (strain JCM 4626 / CBS 651.72 / NBRC 13350 / KCC S-0626 / ISP 5235).